The sequence spans 209 residues: Ribosomal RNA large subunit methyltransferase E (209 aa).

Residues Gly63, Trp65, Asp83, Asp99, and Asp124 each coordinate S-adenosyl-L-methionine. Lys164 serves as the catalytic Proton acceptor.

Belongs to the class I-like SAM-binding methyltransferase superfamily. RNA methyltransferase RlmE family.

Its subcellular location is the cytoplasm. The catalysed reaction is uridine(2552) in 23S rRNA + S-adenosyl-L-methionine = 2'-O-methyluridine(2552) in 23S rRNA + S-adenosyl-L-homocysteine + H(+). Its function is as follows. Specifically methylates the uridine in position 2552 of 23S rRNA at the 2'-O position of the ribose in the fully assembled 50S ribosomal subunit. The sequence is that of Ribosomal RNA large subunit methyltransferase E from Shewanella sp. (strain MR-7).